Here is a 265-residue protein sequence, read N- to C-terminus: 4-hydroxy-tetrahydrodipicolinate reductase (265 aa).

NAD(+) is bound by residues 7-12 (GASGRM) and aspartate 33. Arginine 34 is a binding site for NADP(+). NAD(+) contacts are provided by residues 96-98 (GTT) and 120-123 (AANM). The active-site Proton donor/acceptor is the histidine 153. A (S)-2,3,4,5-tetrahydrodipicolinate-binding site is contributed by histidine 154. Lysine 157 functions as the Proton donor in the catalytic mechanism. A (S)-2,3,4,5-tetrahydrodipicolinate-binding site is contributed by 163–164 (GT).

The protein belongs to the DapB family.

It is found in the cytoplasm. It carries out the reaction (S)-2,3,4,5-tetrahydrodipicolinate + NAD(+) + H2O = (2S,4S)-4-hydroxy-2,3,4,5-tetrahydrodipicolinate + NADH + H(+). The enzyme catalyses (S)-2,3,4,5-tetrahydrodipicolinate + NADP(+) + H2O = (2S,4S)-4-hydroxy-2,3,4,5-tetrahydrodipicolinate + NADPH + H(+). It functions in the pathway amino-acid biosynthesis; L-lysine biosynthesis via DAP pathway; (S)-tetrahydrodipicolinate from L-aspartate: step 4/4. Catalyzes the conversion of 4-hydroxy-tetrahydrodipicolinate (HTPA) to tetrahydrodipicolinate. In Burkholderia orbicola (strain AU 1054), this protein is 4-hydroxy-tetrahydrodipicolinate reductase.